The primary structure comprises 342 residues: Ribosomal RNA small subunit methyltransferase C (342 aa).

This sequence belongs to the methyltransferase superfamily. RsmC family. As to quaternary structure, monomer.

Its subcellular location is the cytoplasm. It carries out the reaction guanosine(1207) in 16S rRNA + S-adenosyl-L-methionine = N(2)-methylguanosine(1207) in 16S rRNA + S-adenosyl-L-homocysteine + H(+). Its function is as follows. Specifically methylates the guanine in position 1207 of 16S rRNA in the 30S particle. The polypeptide is Ribosomal RNA small subunit methyltransferase C (Salmonella paratyphi A (strain ATCC 9150 / SARB42)).